The following is a 243-amino-acid chain: Probable flavin-dependent thymidylate synthase (243 aa).

One can recognise a ThyX domain in the interval 21–239; it reads FEVDDFEESK…PNTYQDIPDV (219 aa). FAD contacts are provided by residues Ser80 and 103–105; that span reads RHR. DUMP contacts are provided by residues 100–103, 113–115, and Arg178; these read ELER and SQR. The short motif at 103-113 is the ThyX motif element; that stretch reads RHRHLSFSVVS. 194-196 provides a ligand contact to FAD; that stretch reads NHR. Arg205 serves as a coordination point for dUMP. Arg205 functions as the Involved in ionization of N3 of dUMP, leading to its activation in the catalytic mechanism.

The protein belongs to the thymidylate synthase ThyX family. In terms of assembly, homotetramer. FAD serves as cofactor.

The enzyme catalyses dUMP + (6R)-5,10-methylene-5,6,7,8-tetrahydrofolate + NADPH + H(+) = dTMP + (6S)-5,6,7,8-tetrahydrofolate + NADP(+). The protein operates within pyrimidine metabolism; dTTP biosynthesis. Its function is as follows. Catalyzes the reductive methylation of 2'-deoxyuridine-5'-monophosphate (dUMP) to 2'-deoxythymidine-5'-monophosphate (dTMP) while utilizing 5,10-methylenetetrahydrofolate (mTHF) as the methyl donor, and NADPH and FADH(2) as the reductant. The chain is Probable flavin-dependent thymidylate synthase (48) from Mycobacterium phage L5 (Mycobacteriophage L5).